We begin with the raw amino-acid sequence, 198 residues long: RxLR effector protein Htp1 (198 aa).

The first 23 residues, 1 to 23 (MRIHHPLTLAALCVVLHESLGAA), serve as a signal peptide directing secretion. The RxLR signature appears at 46–49 (RHLR). 2 disordered regions span residues 48–101 (LRSD…TPMK) and 115–198 (TKNA…PTFD). Asn-70 is a glycosylation site (N-linked (GlcNAc...) asparagine). A compositionally biased stretch (polar residues) spans 70-91 (NNSQEQATTGNSVETNQVPSTE). Residues 126-137 (DDDDSDFSDDDV) show a composition bias toward acidic residues. The segment covering 173 to 191 (APTNAPTGTDAPTDAPTDA) has biased composition (low complexity).

Belongs to the RxLR effector family. In terms of assembly, interacts with the effector Htp3 within the host cells.

The protein localises to the secreted. The protein resides in the host cell. Effector involved in the disease saprolegniosis in salmonids and other freshwater fish, resulting in considerable economic losses in aquaculture. Within the host fish cells, Htp1 is involved in the uptake of the S.parasitica effector Htp3 at a neutral pH (pH 7.5) and its release from vesicles into host cytosol where it degrades nucleic acids. The polypeptide is RxLR effector protein Htp1 (Saprolegnia parasitica (strain CBS 223.65)).